A 469-amino-acid polypeptide reads, in one-letter code: Keratin, type I cytoskeletal 16 (469 aa).

A disordered region spans residues 1-20; it reads MATCSRQFTSSSSMKGSCGI. The head stretch occupies residues 1-112; sequence MATCSRQFTS…GIGDGLLVGS (112 aa). Residues 113 to 148 form a coil 1A region; that stretch reads EKVTMQNLNDRLATYLDKVRALEEANRDLEVKIRDW. Positions 113–424 constitute an IF rod domain; the sequence is EKVTMQNLND…RLLDGENIHS (312 aa). The segment at 149-166 is linker 1; that stretch reads YQRQRPTEIKDYSPYFKT. The tract at residues 167–258 is coil 1B; the sequence is IEDLKSKIII…KNHEEEMLAL (92 aa). The interval 259–281 is linker 12; the sequence is RGQTGGDVNVEMDAAPGVDLSRI. A coil 2 region spans residues 282–420; that stretch reads LNEMRDQYEQ…ATYRRLLDGE (139 aa). The interval 421-469 is tail; it reads NIHSSSQHSSGQSYSSREVFSSSSRQPRSILKEQGSTSFSQSQSQSSRD. The tract at residues 422–469 is disordered; it reads IHSSSQHSSGQSYSSREVFSSSSRQPRSILKEQGSTSFSQSQSQSSRD. Composition is skewed to low complexity over residues 423-444 and 454-469; these read HSSSQHSSGQSYSSREVFSSSS and QGSTSFSQSQSQSSRD.

This sequence belongs to the intermediate filament family. Heterodimer of a type I and a type II keratin. KRT16 associates with KRT6 isomers (KRT6A or KRT6B). Interacts with TCHP. Interacts with TRADD. As to expression, expressed in the epithelia of the tongue, upper and lower palate, footpad, proximal nail fold and nail bed, penile spine, sweat gland ducts, and back epidermis (at protein level). Expressed in upper suprabasal layers of the corneal epithelium (at protein level). Expressed in internal stratified epithelia in the esophagus and vagina (at protein level). Expressed in transitional stratified squamous epithelia in the forestomach, anal canal, and nasal cavity (at protein level). Expressed in transitional epithelia of the ureter, bladder and urethra (at protein level). In mature hair follicles, expressed in the companion layer of the outer root sheath during anagen and in the club hair sheath during catagen and telogen (at protein level).

Functionally, epidermis-specific type I keratin that plays a key role in skin. Acts as a regulator of innate immunity in response to skin barrier breach: required for some inflammatory checkpoint for the skin barrier maintenance. This chain is Keratin, type I cytoskeletal 16 (Krt16), found in Mus musculus (Mouse).